Here is a 91-residue protein sequence, read N- to C-terminus: Small ribosomal subunit protein uS15 (91 aa).

It belongs to the universal ribosomal protein uS15 family. As to quaternary structure, part of the 30S ribosomal subunit. Forms a bridge to the 50S subunit in the 70S ribosome, contacting the 23S rRNA.

In terms of biological role, one of the primary rRNA binding proteins, it binds directly to 16S rRNA where it helps nucleate assembly of the platform of the 30S subunit by binding and bridging several RNA helices of the 16S rRNA. Functionally, forms an intersubunit bridge (bridge B4) with the 23S rRNA of the 50S subunit in the ribosome. This chain is Small ribosomal subunit protein uS15, found in Cytophaga hutchinsonii (strain ATCC 33406 / DSM 1761 / CIP 103989 / NBRC 15051 / NCIMB 9469 / D465).